Here is an 872-residue protein sequence, read N- to C-terminus: Lysosomal cholesterol signaling protein (872 aa).

Topologically, residues 1–40 (MNSFSNLPAENLTIAVNMTKTLPTAVMHGFNSTNDPPSMS) are lumenal. The interval 3 to 372 (SFSNLPAENL…SAWLLTFPTM (370 aa)) is PIN-like transporter. Residues Asn-11, Asn-17, and Asn-31 are each glycosylated (N-linked (GlcNAc...) asparagine). Residues 41-61 (ITRLFPALLECFGIVLCGYIA) traverse the membrane as a helical segment. 2 residues coordinate cholesterol: Phe-45 and Tyr-59. Topologically, residues 62–81 (GRANVITSTQAKGLGNFVSR) are cytoplasmic. Residues 82–102 (FALPALLFKNMVVLNFSNVDW) traverse the membrane as a helical segment. The Lumenal segment spans residues 103-106 (SFLY). Residues 107-127 (SILIAKASVFFIVCVLTLLVA) form a helical membrane-spanning segment. Over 128 to 135 (SPDSRFSK) the chain is Cytoplasmic. The chain crosses the membrane as a discontinuously helical span at residues 136 to 156 (AGLFPIFATQSNDFALGYPIV). Residues 157–169 (EALYQTTYPEYLQ) lie on the Lumenal side of the membrane. The chain crosses the membrane as a helical span at residues 170 to 190 (YIYLVAPISLMMLNPIGFIFC). At 191-215 (EIQKWKDTQNASQNKIKIVGLGLLR) the chain is on the cytoplasmic side. The chain crosses the membrane as a discontinuously helical span at residues 216-236 (VLQNPIVFMVFIGIAFNFILD). Topologically, residues 237 to 245 (RKVPVYVEN) are lumenal. The chain crosses the membrane as a discontinuously helical span at residues 246-266 (FLDGLGNSFSGSALFYLGLTM). Residues 267-275 (VGKIKRLKK) lie on the Cytoplasmic side of the membrane. Cholesterol is bound by residues Gly-268, Lys-269, and Ile-270. The helical transmembrane segment at 276–296 (SAFVVLILLITAKLLVLPLLC) threads the bilayer. The Lumenal portion of the chain corresponds to 297–317 (REMVELLDKGDSVVNHTSLSN). Residue Asn-311 is glycosylated (N-linked (GlcNAc...) asparagine). The discontinuously helical transmembrane segment at 318-338 (YAFLYGVFPVAPGVAIFATQF) threads the bilayer. Topologically, residues 339–348 (NMEVEIITSG) are cytoplasmic. A helical transmembrane segment spans residues 349-369 (MVISTFVSAPIMYVSAWLLTF). Topologically, residues 370 to 383 (PTMDPKPLAYAIQN) are lumenal. Residues 382 to 719 (QNVSFDISIV…FGIFGLDKHL (338 aa)) are GPCR. Asn-383 carries N-linked (GlcNAc...) asparagine glycosylation. The chain crosses the membrane as a helical span at residues 384–404 (VSFDISIVSLISLIWSQAILL). The Cytoplasmic segment spans residues 405-416 (LSKKYKQLPHML). The chain crosses the membrane as a helical span at residues 417 to 437 (TTNLLIAQSIVCAGMMIWNFV). Topologically, residues 438–440 (KEK) are lumenal. Residues 441 to 461 (NFVGQILVFVLLYSSLYSTYL) traverse the membrane as a helical segment. At 462 to 482 (WTGLLAISLFLLKKRERVQIP) the chain is on the cytoplasmic side. Residues 483 to 503 (VGIIIISGWGIPALLVGVLLI) traverse the membrane as a helical segment. Residues 504 to 522 (TGKHSGDSIDSAFFYGKEQ) are Lumenal-facing. The chain crosses the membrane as a helical span at residues 523-543 (MITTAVTLFCSILIAGISLMC). Topologically, residues 544–662 (MNRTAQAGSY…GDQQLTRHVL (119 aa)) are cytoplasmic. Arg-659 contacts cholesterol. Residues 663–683 (LCLLLIIGLFANLSSCLWWLF) traverse the membrane as a helical segment. At 684 to 693 (NQEPGRLYVE) the chain is on the lumenal side. The chain crosses the membrane as a helical span at residues 694–714 (LQFFCAVFNFGQGFISFGIFG). At 715–872 (LDKHLIILPF…SSPPSHSPKT (158 aa)) the chain is on the cytoplasmic side. The DEP domain maps to 759-837 (YHRDLCIRNI…DEYLFYRFLQ (79 aa)).

In terms of assembly, homodimer; via the transporter region and DEP domain. Interacts with the GATOR1 complex; preventing interaction between GATOR1 and KICSTOR; interaction is disrupted upon cholesterol starvation.

The protein resides in the lysosome membrane. In terms of biological role, cholesterol-binding protein that acts as a regulator of mTORC1 signaling pathway. Acts as a sensor of cholesterol to signal cholesterol sufficiency to mTORC1: in presence of cholesterol, binds cholesterol, leading to disruption of the interaction between the GATOR1 and KICSTOR complexes and promotion of mTORC1 signaling. Upon cholesterol starvation, GPR155/LYCHOS is unable to perturb the association between GATOR1 and KICSTOR, leading to mTORC1 signaling inhibition. Binds indole-3-acetic acid and may play a role in tryptophan metabolism. This chain is Lysosomal cholesterol signaling protein (GPR155), found in Pongo abelii (Sumatran orangutan).